The primary structure comprises 791 residues: uncharacterized protein (791 aa).

4 helical membrane passes run 104-124 (MWIL…FFLM), 131-151 (IAAI…YYII), 177-197 (ACLY…TLII), and 226-246 (WSGL…PSVL). A glycan (N-linked (GlcNAc...) asparagine) is linked at N265. Transmembrane regions (helical) follow at residues 274–294 (FFIV…IFPA), 309–329 (SAVL…PLTL), 346–366 (WATC…LPGL), 421–441 (FIIN…SFFL), 471–491 (VHWG…FAFT), 501–521 (SYGF…LSLI), 533–553 (AFFE…LLYF), and 583–603 (LVAA…SAVT). N621 carries an N-linked (GlcNAc...) asparagine glycan. Helical transmembrane passes span 653 to 673 (FVMW…LLQI), 697 to 717 (SVTG…NYLI), and 733 to 753 (AAAM…CVVY). An N-linked (GlcNAc...) asparagine glycan is attached at N759.

Belongs to the oligopeptide OPT transporter family.

It is found in the membrane. This is an uncharacterized protein from Schizosaccharomyces pombe (strain 972 / ATCC 24843) (Fission yeast).